The following is a 215-amino-acid chain: 3-demethoxyubiquinol 3-hydroxylase (215 aa).

Positions 64, 94, 97, 146, 178, and 181 each coordinate Fe cation.

It belongs to the COQ7 family. The cofactor is Fe cation.

The protein localises to the cell membrane. The catalysed reaction is a 5-methoxy-2-methyl-3-(all-trans-polyprenyl)benzene-1,4-diol + AH2 + O2 = a 3-demethylubiquinol + A + H2O. Its pathway is cofactor biosynthesis; ubiquinone biosynthesis. Its function is as follows. Catalyzes the hydroxylation of 2-nonaprenyl-3-methyl-6-methoxy-1,4-benzoquinol during ubiquinone biosynthesis. The sequence is that of 3-demethoxyubiquinol 3-hydroxylase from Pseudomonas putida (strain GB-1).